The sequence spans 368 residues: Protein L-Myc (368 aa).

Disordered regions lie at residues 39-79, 112-179, and 218-295; these read PPTS…RGHS, RLAP…EKRR, and FPPE…FLER. The segment covering 135-147 has biased composition (polar residues); it reads LEASNPAPATQCQ. Acidic residues predominate over residues 247–258; it reads EEEEEEEEEEEI. Over residues 283-294 the composition is skewed to basic and acidic residues; sequence DVTKRKNHNFLE. A bHLH domain is found at 285–337; the sequence is TKRKNHNFLERKRRNDLRSRFLALRDQVPTLASCSKAPKVVILSKALEYLQAL. The interval 337–365 is leucine-zipper; sequence LVGAEKKMATEKRQLRCRQQQLQKRIAYL.

Efficient DNA binding requires dimerization with another bHLH protein. Binds DNA as a heterodimer with MAX.

The protein resides in the nucleus. The chain is Protein L-Myc (Mycl) from Mus musculus (Mouse).